Here is a 125-residue protein sequence, read N- to C-terminus: Holo-[acyl-carrier-protein] synthase (125 aa).

Residues Asp-8 and Glu-57 each coordinate Mg(2+).

The protein belongs to the P-Pant transferase superfamily. AcpS family. Mg(2+) is required as a cofactor.

It localises to the cytoplasm. The catalysed reaction is apo-[ACP] + CoA = holo-[ACP] + adenosine 3',5'-bisphosphate + H(+). Transfers the 4'-phosphopantetheine moiety from coenzyme A to a Ser of acyl-carrier-protein. This is Holo-[acyl-carrier-protein] synthase from Nitrosomonas europaea (strain ATCC 19718 / CIP 103999 / KCTC 2705 / NBRC 14298).